The following is a 168-amino-acid chain: Photosystem I assembly protein Ycf3 (168 aa).

3 TPR repeats span residues 35–68 (AFTYYRDGMSAQSEGNYAEALQNYYEAMRLEIDP), 72–105 (SYILYNIGLIHTSNGEHTKALEYYFRALERNPFL), and 120–153 (GEQAIQQGDSEIAEAWFDQAAEYWKQAIALTPGN).

The protein belongs to the Ycf3 family.

It localises to the plastid. The protein resides in the chloroplast thylakoid membrane. Essential for the assembly of the photosystem I (PSI) complex. May act as a chaperone-like factor to guide the assembly of the PSI subunits. In Nicotiana sylvestris (Wood tobacco), this protein is Photosystem I assembly protein Ycf3.